The following is a 396-amino-acid chain: ATP-dependent RNA helicase eIF4A (396 aa).

Positions 23 to 51 (DSFDEMNLKSELLRGIYAYGFERPSAIQQ) match the Q motif motif. A Helicase ATP-binding domain is found at 54–224 (IMPVIKGHDV…TKFMRDPVRI (171 aa)). An ATP-binding site is contributed by 67–74 (AQSGTGKT). Residues 172–175 (DEAD) carry the DEAD box motif. The region spanning 235-396 (GIKQFYIAVE…EMPMNVADLI (162 aa)) is the Helicase C-terminal domain.

It belongs to the DEAD box helicase family. eIF4A subfamily. Component of the eIF4F complex, which composition varies with external and internal environmental conditions. It is composed of at least eIF4A, eIF4E and eIF4G.

It is found in the cytoplasm. It catalyses the reaction ATP + H2O = ADP + phosphate + H(+). In terms of biological role, ATP-dependent RNA helicase which is a subunit of the eIF4F complex involved in cap recognition and is required for mRNA binding to ribosome. In the current model of translation initiation, eIF4A unwinds RNA secondary structures in the 5'-UTR of mRNAs which is necessary to allow efficient binding of the small ribosomal subunit, and subsequent scanning for the initiator codon. The polypeptide is ATP-dependent RNA helicase eIF4A (TIF1) (Pyricularia oryzae (strain 70-15 / ATCC MYA-4617 / FGSC 8958) (Rice blast fungus)).